Reading from the N-terminus, the 1037-residue chain is Serine/threonine-protein kinase ULK2 (1037 aa).

Residues 9–271 (YCKRDLVGHG…FEAFFSHPFL (263 aa)) enclose the Protein kinase domain. Residues 15–23 (VGHGAFAVV) and lysine 39 contribute to the ATP site. The active-site Proton acceptor is aspartate 131. A disordered region spans residues 319 to 350 (ENLSSPPLGPPNYLQVSKDSASNSSKNSSCDT). A compositionally biased stretch (low complexity) spans 335-348 (SKDSASNSSKNSSC). A Phosphoserine modification is found at serine 430. Disordered regions lie at residues 452–480 (CSPV…PSPL), 494–515 (GHPQ…PQTQ), 540–594 (QKLR…KTPL), and 626–697 (HGPA…NTER). Composition is skewed to polar residues over residues 506–515 (SSGSPVPQTQ) and 571–585 (LGTS…SPRN). Basic and acidic residues predominate over residues 632 to 643 (QSKDGNDPRECS). The span at 658 to 678 (QQQSKAVFGRSVSTGKLSEQQ) shows a compositional bias: polar residues. Phosphoserine occurs at positions 772 and 781. A CTD-like region region spans residues 813 to 1037 (ELPEETLMER…SALCCSTATV (225 aa)).

It belongs to the protein kinase superfamily. Ser/Thr protein kinase family. APG1/unc-51/ULK1 subfamily. As to quaternary structure, component of a complex consisting of ATG13/KIAA0652, ULK1 and RB1CC1/FIP200. Interacts (via C-terminus) with ATG13/KIAA0652. Associates with the mammalian target of rapamycin complex 1 (mTORC1) through an interaction with RPTOR. Interacts with SYNGAP1. Autophosphorylated. In response to nutrient limitation, probably phosphorylated and activated by AMPK, leading to activate autophagy. In terms of tissue distribution, widely expressed.

It localises to the cytoplasmic vesicle membrane. It catalyses the reaction L-seryl-[protein] + ATP = O-phospho-L-seryl-[protein] + ADP + H(+). The catalysed reaction is L-threonyl-[protein] + ATP = O-phospho-L-threonyl-[protein] + ADP + H(+). Functionally, serine/threonine-protein kinase involved in autophagy in response to starvation. Acts upstream of phosphatidylinositol 3-kinase PIK3C3 to regulate the formation of autophagophores, the precursors of autophagosomes. Part of regulatory feedback loops in autophagy: acts both as a downstream effector and a negative regulator of mammalian target of rapamycin complex 1 (mTORC1) via interaction with RPTOR. Activated via phosphorylation by AMPK, also acts as a negative regulator of AMPK through phosphorylation of the AMPK subunits PRKAA1, PRKAB2 and PRKAG1. May phosphorylate ATG13/KIAA0652, FRS2, FRS3 and RPTOR; however such data need additional evidences. Not involved in ammonia-induced autophagy or in autophagic response of cerebellar granule neurons (CGN) to low potassium concentration. Plays a role early in neuronal differentiation and is required for granule cell axon formation: may govern axon formation via Ras-like GTPase signaling and through regulation of the Rab5-mediated endocytic pathways within developing axons. The protein is Serine/threonine-protein kinase ULK2 (Ulk2) of Mus musculus (Mouse).